Reading from the N-terminus, the 161-residue chain is Tick receptor for ospA (161 aa).

As to quaternary structure, interacts with ospA protein from B.burgdorferi. Post-translationally, glycosylated. Specifically expressed in gut. Localizes predominantly in the intercellular spaces and luminal surface of the gut. In the gut, it localizes along tight junctions. Not expressed in salivary gland or hemolymph.

The protein resides in the cell membrane. Functionally, serves as a receptor for ospA protein of B.burgdorferi, the Lyme disease agent. Required for spirochetal colonization. Essential for pathogen adherence to the vector. The protein is Tick receptor for ospA (TROSPA) of Ixodes scapularis (Black-legged tick).